Reading from the N-terminus, the 273-residue chain is 4-hydroxy-tetrahydrodipicolinate reductase (273 aa).

NAD(+)-binding positions include 12 to 17 (GAGGRM) and Glu38. Arg39 is an NADP(+) binding site. NAD(+)-binding positions include 102 to 104 (GTT) and 126 to 129 (AANF). The Proton donor/acceptor role is filled by His159. His160 is a binding site for (S)-2,3,4,5-tetrahydrodipicolinate. The Proton donor role is filled by Lys163. Residue 169-170 (GT) coordinates (S)-2,3,4,5-tetrahydrodipicolinate.

This sequence belongs to the DapB family. Homotetramer.

It localises to the cytoplasm. The enzyme catalyses (S)-2,3,4,5-tetrahydrodipicolinate + NAD(+) + H2O = (2S,4S)-4-hydroxy-2,3,4,5-tetrahydrodipicolinate + NADH + H(+). The catalysed reaction is (S)-2,3,4,5-tetrahydrodipicolinate + NADP(+) + H2O = (2S,4S)-4-hydroxy-2,3,4,5-tetrahydrodipicolinate + NADPH + H(+). Its pathway is amino-acid biosynthesis; L-lysine biosynthesis via DAP pathway; (S)-tetrahydrodipicolinate from L-aspartate: step 4/4. Catalyzes the conversion of 4-hydroxy-tetrahydrodipicolinate (HTPA) to tetrahydrodipicolinate. The polypeptide is 4-hydroxy-tetrahydrodipicolinate reductase (Salmonella gallinarum (strain 287/91 / NCTC 13346)).